Consider the following 429-residue polypeptide: Probable M18 family aminopeptidase 2 (429 aa).

3 residues coordinate Zn(2+): His-82, His-156, and His-401.

The protein belongs to the peptidase M18 family. Zn(2+) is required as a cofactor.

This chain is Probable M18 family aminopeptidase 2, found in Pseudomonas syringae pv. syringae (strain B728a).